Reading from the N-terminus, the 186-residue chain is MAGNKKRGGRNMDQVKKAAVRSDGVGGSATNAELPMANLVRLIKKVLPGKAKIGGAAKGLTHDCAVEFVGFVGDEASEKAKAEHRRTVAPEDYLGSFGDLGFDRYVDPMDAYIHGYREFERAGGNRRVAPPPPAAATPLTPGGPTFTDAELQFLRSVIPSRSDDEYSGSSPAIGGYGYGYGYGKNM.

The disordered stretch occupies residues Met1–Gly24. A DNA-binding region spans residues Leu34–Val40. The tract at residues Thr61 to Val72 is subunit association domain (SAD). The segment at Gly123 to Gly142 is disordered.

It belongs to the NFYB/HAP3 subunit family. In terms of assembly, heterotrimeric transcription factor composed of three components, NF-YA, NF-YB and NF-YC. NF-YB and NF-YC must interact and dimerize for NF-YA association and DNA binding. Interacts with MADS18. Forms a ternary complex with the MADS6-MADS18 heterodimer. As to expression, expressed in developing kernels.

Its subcellular location is the nucleus. Component of the NF-Y/HAP transcription factor complex. The NF-Y complex stimulates the transcription of various genes by recognizing and binding to a CCAAT motif in promoters. May act through association with MADS-box proteins. May regulate the expression of genes involved in flowering. The sequence is that of Nuclear transcription factor Y subunit B-1 (NFYB1) from Oryza sativa subsp. japonica (Rice).